The chain runs to 1130 residues: Integrin alpha-6 (1130 aa).

The first 23 residues, 1–23 (MAAAGQLCLLYLSAGLLSRLGAA), serve as a signal peptide directing secretion. Residues 24 to 1050 (FNLDTREDNV…FPSKTVAQYS (1027 aa)) are Extracellular-facing. 7 FG-GAP repeats span residues 30–95 (EDNV…GPCT), 101–166 (NDAD…IEDD), 176–229 (DGRL…FFDM), 283–339 (EQPD…KSAH), 340–402 (LLPE…RWNN), 403–458 (VKPI…GINT), and 459–518 (KPTQ…VTPN). N78 is a glycosylation site (N-linked (GlcNAc...) asparagine). 3 disulfides stabilise this stretch: C86-C94, C131-C154, and C175-C188. N-linked (GlcNAc...) asparagine glycans are attached at residues N223 and N323. Residues D363, N365, D367, and D371 each coordinate Ca(2+). An N-linked (GlcNAc...) asparagine glycan is attached at N409. D425, N427, D429, Y431, D433, D480, D482, N484, Y486, and D488 together coordinate Ca(2+). 4 cysteine pairs are disulfide-bonded: C528/C535, C541/C601, C665/C671, and C765/C776. N-linked (GlcNAc...) asparagine glycosylation is found at N770, N787, N930, and N966. 2 disulfide bridges follow: C920-C967 and C973-C978. N-linked (GlcNAc...) asparagine glycosylation is present at N997. Residues 1051-1076 (GVPWWIILVAILAGILMLALLVFILW) traverse the membrane as a helical segment. Phosphoserine occurs at positions 1059 and 1064. An interaction with HPS5 region spans residues 1077 to 1083 (KCGFFKR). The Cytoplasmic segment spans residues 1077–1130 (KCGFFKRSRYDDSVPRYHAVRIRKEEREIKDEKYIDNLEKKQWITKWNENESYS). C1078 is lipidated: S-palmitoyl cysteine; by DHHC3. A GFFKR motif motif is present at residues 1079-1083 (GFFKR). At R1103 the chain carries Phosphoserine.

This sequence belongs to the integrin alpha chain family. As to quaternary structure, heterodimer of an alpha and a beta subunit. The alpha subunit is composed of a heavy and a light chain linked by a disulfide bond. Alpha-6 associates with either beta-1 (ITGB1) or beta-4 (ITGB4) to form ITGA6:ITGB1 and ITGA6:ITGB4, respectively. ITGA6:ITGB1 is found in a complex with CD9; interaction takes place in oocytes and is involved in sperm-egg fusion. ITGA6:ITGB4 is found in a ternary complex with NRG1 and ERBB3. ITGA6:ITGB4 is found in a ternary complex with IGF1 and IGF1R. ITGA6:ITGB4 interacts with IGF2. Interacts with ADAM9. Interacts with RAB21. Interacts with MDK. ITGA6:ITGB1 interacts with MDK; this interaction mediates MDK-induced neurite outgrowth. Interacts with CD82; this interaction down-regulates ITGA6-mediated cell adhesion. Post-translationally, isoforms containing segment A, but not segment B, are the major targets for PMA-induced phosphorylation. Phosphorylation occurs on 'Ser-1103' of isoform alpha-6X1X2A. Phosphorylation is not required for the induction of integrin alpha-6A/beta-1 high affinity but may reduce the affinity for ligand. Undergoes PLAU-mediated cleavage at residues Arg-634-635-Arg in a time-dependent manner to produce processed integrin alpha-6 (alpha6p). Production of alpha6p enhances prostate cancer cell invasion and migration. In terms of processing, palmitoylation by DHHC3 enhances stability and cell surface expression. In terms of tissue distribution, integrin alpha-6/beta-4 is predominantly expressed by epithelia. Isoforms containing segment X1 are ubiquitously expressed. Isoforms containing segment X1X2 are expressed in heart, kidney, placenta, colon, duodenum, myoblasts and myotubes, and in a limited number of cell lines; they are always coexpressed with the ubiquitous isoform containing segment X1. In some tissues (e.g. Salivary gland), isoforms containing cytoplasmic segment A and isoforms containing segment B are detected while in others, only isoforms containing one cytoplasmic segment are found (segment A in epidermis and segment B in kidney). Processed integrin alpha-6: Expressed at low levels in normal prostate tissue with elevated levels in prostate cancer tissue (at protein level).

Its subcellular location is the cell membrane. Functionally, integrin alpha-6/beta-1 (ITGA6:ITGB1) is a receptor for laminin on platelets. Integrin alpha-6/beta-1 (ITGA6:ITGB1) is present in oocytes and is involved in sperm-egg fusion. Integrin alpha-6/beta-4 (ITGA6:ITGB4) is a receptor for laminin in epithelial cells and it plays a critical structural role in the hemidesmosome. ITGA6:ITGB4 binds to NRG1 (via EGF domain) and this binding is essential for NRG1-ERBB signaling. ITGA6:ITGB4 binds to IGF1 and this binding is essential for IGF1 signaling. ITGA6:ITGB4 binds to IGF2 and this binding is essential for IGF2 signaling. This is Integrin alpha-6 (ITGA6) from Homo sapiens (Human).